Reading from the N-terminus, the 273-residue chain is Kit ligand (273 aa).

Residues 1 to 25 form the signal peptide; it reads MKKTQTWIITCIYLQLLLFNPLVKT. Glutamine 26 is subject to Pyrrolidone carboxylic acid. The Extracellular segment spans residues 26-214; the sequence is QEICRNPVTD…AKSPEDPGLQ (189 aa). Cystine bridges form between cysteine 29-cysteine 114 and cysteine 68-cysteine 163. N-linked (GlcNAc...) asparagine; partial glycosylation occurs at asparagine 90. Asparagine 145 carries an N-linked (GlcNAc...) asparagine glycan. An O-linked (GalNAc...) serine glycan is attached at serine 167. Threonine 168 and threonine 180 each carry an O-linked (GalNAc...) threonine glycan. Residues 190–211 form a disordered region; the sequence is ASSLRNDSSSSNRKAAKSPEDP. Positions 191–202 are enriched in low complexity; sequence SSLRNDSSSSNR. Residue asparagine 195 is glycosylated (N-linked (GlcNAc...) asparagine). The chain crosses the membrane as a helical span at residues 215–237; the sequence is WTAMALPALISLVIGFAFGALYW. The Cytoplasmic segment spans residues 238–273; the sequence is KKKQSSLTRAVENIQINEEDNEISMLQQKEREFQEV.

The protein belongs to the SCF family. Homodimer, non-covalently linked. Heterotetramer with KIT, binding two KIT molecules; thereby mediates KIT dimerization and subsequent activation by autophosphorylation. Post-translationally, a soluble form is produced by proteolytic processing of isoform 1 in the extracellular domain. In terms of processing, the identity of N- and O-linked saccharides is not reported in PubMed:1708771. The O-linked polysaccharides are probably the mucin type linked to GalNAc.

Its subcellular location is the cell membrane. The protein resides in the cytoplasm. It is found in the cytoskeleton. It localises to the cell projection. The protein localises to the lamellipodium. Its subcellular location is the filopodium. The protein resides in the secreted. Its function is as follows. Ligand for the receptor-type protein-tyrosine kinase KIT. Plays an essential role in the regulation of cell survival and proliferation, hematopoiesis, stem cell maintenance, gametogenesis, mast cell development, migration and function, and in melanogenesis. KITLG/SCF binding can activate several signaling pathways. Promotes phosphorylation of PIK3R1, the regulatory subunit of phosphatidylinositol 3-kinase, and subsequent activation of the kinase AKT1. KITLG/SCF and KIT also transmit signals via GRB2 and activation of RAS, RAF1 and the MAP kinases MAPK1/ERK2 and/or MAPK3/ERK1. KITLG/SCF and KIT promote activation of STAT family members STAT1, STAT3 and STAT5. KITLG/SCF and KIT promote activation of PLCG1, leading to the production of the cellular signaling molecules diacylglycerol and inositol 1,4,5-trisphosphate. KITLG/SCF acts synergistically with other cytokines, probably interleukins. The protein is Kit ligand (Kitlg) of Rattus norvegicus (Rat).